We begin with the raw amino-acid sequence, 813 residues long: Calpain-7 (813 aa).

Met-1 is subject to N-acetylmethionine. Residue Thr-95 is modified to Phosphothreonine. A Calpain catalytic domain is found at 232-540; the sequence is RERFAYPMPF…YDVVYLSWNP (309 aa). Residues Cys-290, His-458, and Asn-478 contribute to the active site. A domain III region spans residues 541–701; the sequence is ALFKESTCIH…INGKWSGQSA (161 aa). The interval 702–813 is domain N; the sequence is GGCGNFQETH…TVPIKTTQLQ (112 aa).

It belongs to the peptidase C2 family. As to expression, ubiquitous.

Its subcellular location is the nucleus. Functionally, calcium-regulated non-lysosomal thiol-protease. This is Calpain-7 (Capn7) from Mus musculus (Mouse).